The chain runs to 200 residues: dITP/XTP pyrophosphatase (200 aa).

7–12 (SNNRGK) is a binding site for substrate. Residue aspartate 68 is the Proton acceptor of the active site. Aspartate 68 lines the Mg(2+) pocket. Substrate-binding positions include alanine 69, 154–157 (FGFD), lysine 177, and 182–183 (HR).

Belongs to the HAM1 NTPase family. As to quaternary structure, homodimer. Requires Mg(2+) as cofactor.

The enzyme catalyses XTP + H2O = XMP + diphosphate + H(+). The catalysed reaction is dITP + H2O = dIMP + diphosphate + H(+). It catalyses the reaction ITP + H2O = IMP + diphosphate + H(+). Its function is as follows. Pyrophosphatase that catalyzes the hydrolysis of nucleoside triphosphates to their monophosphate derivatives, with a high preference for the non-canonical purine nucleotides XTP (xanthosine triphosphate), dITP (deoxyinosine triphosphate) and ITP. Seems to function as a house-cleaning enzyme that removes non-canonical purine nucleotides from the nucleotide pool, thus preventing their incorporation into DNA/RNA and avoiding chromosomal lesions. In Delftia acidovorans (strain DSM 14801 / SPH-1), this protein is dITP/XTP pyrophosphatase.